Consider the following 504-residue polypeptide: Potassium voltage-gated channel subfamily V member 1 (504 aa).

2 disordered regions span residues 1–22 (MDLS…GGSL) and 172–193 (KKDT…QGPC). Topologically, residues 1–214 (MDLSPRNRPL…EKPGSSTAAR (214 aa)) are cytoplasmic. Residues 10–22 (LLESSSLDSGGSL) are compositionally biased toward low complexity. Over residues 172–185 (KKDTDDQESQHESE) the composition is skewed to basic and acidic residues. The chain crosses the membrane as a helical span at residues 215 to 235 (IFGVISIIFVAVSIVNMALMS). The Extracellular portion of the chain corresponds to 236-242 (AELSWLN). A helical membrane pass occupies residues 243-263 (LQLLEILEYVCISWFTGEFIL). Residues 264–280 (RFLCVKDRCRFLRKVPN) lie on the Cytoplasmic side of the membrane. The chain crosses the membrane as a helical span at residues 281–301 (IIDLLAILPFYITLLVESLSG). Topologically, residues 302 to 313 (SHTTQELENVGR) are extracellular. Residues 314 to 335 (LVQVLRLLRALRMLKLGRHSTG) traverse the membrane as a helical; Voltage-sensor segment. Residues 336–349 (LRSLGMTITQCYEE) lie on the Cytoplasmic side of the membrane. A helical membrane pass occupies residues 350-370 (VGLLLLFLSVGISIFSTIEYF). The Selectivity filter signature appears at 396 to 401 (TVGYGD). A helical membrane pass occupies residues 411–431 (IVAFMCILSGILVLALPIAII). At 432–504 (NDRFSACYFT…RSSGGDDFWF (73 aa)) the chain is on the cytoplasmic side.

This sequence belongs to the potassium channel family. V (TC 1.A.1.2) subfamily. Kv8.1/KCNV1 sub-subfamily. As to quaternary structure, heteromultimer with KCNB1 and KCNB2. Interacts with KCNC4 and KCND1. Detected in brain, throughout layers II, IV and VI of the brain cortex. Detected in cerebellum and hippocampus, in the granule cell layer, Purkinje cell layer, pyramidal cell layer and dentate gyrus. Detected at lower levels in olfactory bulb, amygdala, thalamus, hypothalamus, midbrain and brainstem.

Its subcellular location is the cell membrane. Functionally, potassium channel subunit that does not form functional channels by itself. Modulates KCNB1 and KCNB2 channel activity by shifting the threshold for inactivation to more negative values and by slowing the rate of inactivation. Can down-regulate the channel activity of KCNB1, KCNB2, KCNC4 and KCND1, possibly by trapping them in intracellular membranes. The chain is Potassium voltage-gated channel subfamily V member 1 (KCNV1) from Mesocricetus auratus (Golden hamster).